A 233-amino-acid polypeptide reads, in one-letter code: Chaperone protein MrkB (233 aa).

An N-terminal signal peptide occupies residues 1–18 (MKRIALFFCFIFSFAAHA).

It belongs to the periplasmic pilus chaperone family.

The protein resides in the periplasm. Its function is as follows. Mediates assembly of pili by forming soluble multimeric complexes with pili subunits as an intermediate step in the assembly process. This protein is involved in type 3 pili assembly. This is Chaperone protein MrkB (mrkB) from Klebsiella pneumoniae.